The following is a 103-amino-acid chain: ATP-dependent Clp protease adapter protein ClpS 1 (103 aa).

This sequence belongs to the ClpS family. Binds to the N-terminal domain of the chaperone ClpA.

Involved in the modulation of the specificity of the ClpAP-mediated ATP-dependent protein degradation. The protein is ATP-dependent Clp protease adapter protein ClpS 1 of Rhodopseudomonas palustris (strain ATCC BAA-98 / CGA009).